Reading from the N-terminus, the 330-residue chain is tRNA U34 carboxymethyltransferase (330 aa).

Residues lysine 91, tryptophan 105, lysine 110, glycine 130, 152–154 (DPS), 181–182 (IE), methionine 196, tyrosine 200, and arginine 315 contribute to the carboxy-S-adenosyl-L-methionine site.

Belongs to the class I-like SAM-binding methyltransferase superfamily. CmoB family. In terms of assembly, homotetramer.

The catalysed reaction is carboxy-S-adenosyl-L-methionine + 5-hydroxyuridine(34) in tRNA = 5-carboxymethoxyuridine(34) in tRNA + S-adenosyl-L-homocysteine + H(+). Functionally, catalyzes carboxymethyl transfer from carboxy-S-adenosyl-L-methionine (Cx-SAM) to 5-hydroxyuridine (ho5U) to form 5-carboxymethoxyuridine (cmo5U) at position 34 in tRNAs. This chain is tRNA U34 carboxymethyltransferase, found in Shewanella pealeana (strain ATCC 700345 / ANG-SQ1).